A 270-amino-acid polypeptide reads, in one-letter code: Karrikin insensitive 2 receptor CA (270 aa).

S95 serves as the catalytic Nucleophile. Residues D217 and H246 contribute to the active site.

It belongs to the AB hydrolase superfamily. As to expression, expressed in stigma.

The protein localises to the nucleus. It localises to the cytoplasm. In terms of biological role, hydrolase which may be involved in plant olfaction during volatile communication. The polypeptide is Karrikin insensitive 2 receptor CA (Petunia hybrida (Petunia)).